Consider the following 63-residue polypeptide: Large ribosomal subunit protein uL30 (63 aa).

Belongs to the universal ribosomal protein uL30 family. In terms of assembly, part of the 50S ribosomal subunit.

The chain is Large ribosomal subunit protein uL30 from Rhodospirillum rubrum (strain ATCC 11170 / ATH 1.1.1 / DSM 467 / LMG 4362 / NCIMB 8255 / S1).